The following is a 65-amino-acid chain: DNA gyrase inhibitor YacG (65 aa).

Zn(2+)-binding residues include cysteine 8, cysteine 11, cysteine 27, and cysteine 31. Positions serine 43–lysine 65 are disordered. Basic and acidic residues predominate over residues aspartate 48–lysine 65.

It belongs to the DNA gyrase inhibitor YacG family. As to quaternary structure, interacts with GyrB. Zn(2+) is required as a cofactor.

In terms of biological role, inhibits all the catalytic activities of DNA gyrase by preventing its interaction with DNA. Acts by binding directly to the C-terminal domain of GyrB, which probably disrupts DNA binding by the gyrase. This chain is DNA gyrase inhibitor YacG, found in Nitrosospira multiformis (strain ATCC 25196 / NCIMB 11849 / C 71).